The primary structure comprises 803 residues: Phenylalanine--tRNA ligase beta subunit (803 aa).

The 113-residue stretch at 39 to 151 folds into the tRNA-binding domain; it reads SMKFSGIKIG…KNAIIGEDIK (113 aa). A B5 domain is found at 406-482; sequence PKKILIKLYK…RFYGFEKIPI (77 aa). Aspartate 466 and aspartate 470 together coordinate Mg(2+). Positions 707 to 800 constitute an FDX-ACB domain; the sequence is SDIPFNYRDI…LKKNFLIEIR (94 aa).

Belongs to the phenylalanyl-tRNA synthetase beta subunit family. Type 1 subfamily. As to quaternary structure, tetramer of two alpha and two beta subunits. Mg(2+) is required as a cofactor.

It is found in the cytoplasm. The enzyme catalyses tRNA(Phe) + L-phenylalanine + ATP = L-phenylalanyl-tRNA(Phe) + AMP + diphosphate + H(+). The chain is Phenylalanine--tRNA ligase beta subunit from Wigglesworthia glossinidia brevipalpis.